The primary structure comprises 247 residues: Probable transcriptional regulatory protein ETA_14870 (247 aa).

The interval 1 to 20 (MAGHSKWANTKHRKAAQDAK) is disordered.

It belongs to the TACO1 family.

The protein resides in the cytoplasm. In Erwinia tasmaniensis (strain DSM 17950 / CFBP 7177 / CIP 109463 / NCPPB 4357 / Et1/99), this protein is Probable transcriptional regulatory protein ETA_14870.